The chain runs to 634 residues: uncharacterized protein (634 aa).

The first 40 residues, 1 to 40 (MWLQQRLKGLPGLLSSSWARRLLCLLGLLLLLLWFGGSGA), serve as a signal peptide directing secretion. Over 41–589 (RRAAGGLHLL…DEHMAQQDPG (549 aa)) the chain is Extracellular. Residue Asn-363 is glycosylated (N-linked (GlcNAc...) asparagine). Residues 590 to 610 (LPFLFWFSVASLITLFHLFLF) traverse the membrane as a helical segment. The Cytoplasmic portion of the chain corresponds to 611–634 (KLIYNEYCGPGAKPLFRSKEDPSV).

Its subcellular location is the membrane. This is an uncharacterized protein from Homo sapiens (Human).